Consider the following 102-residue polypeptide: NADH-quinone oxidoreductase subunit K (102 aa).

The next 3 helical transmembrane spans lie at 5–25 (LGHF…GIFL), 31–51 (IVLL…FVAF), and 62–82 (IFVF…LAIL).

This sequence belongs to the complex I subunit 4L family. In terms of assembly, NDH-1 is composed of 14 different subunits. Subunits NuoA, H, J, K, L, M, N constitute the membrane sector of the complex.

The protein localises to the cell inner membrane. The catalysed reaction is a quinone + NADH + 5 H(+)(in) = a quinol + NAD(+) + 4 H(+)(out). Its function is as follows. NDH-1 shuttles electrons from NADH, via FMN and iron-sulfur (Fe-S) centers, to quinones in the respiratory chain. The immediate electron acceptor for the enzyme in this species is believed to be ubiquinone. Couples the redox reaction to proton translocation (for every two electrons transferred, four hydrogen ions are translocated across the cytoplasmic membrane), and thus conserves the redox energy in a proton gradient. The sequence is that of NADH-quinone oxidoreductase subunit K from Albidiferax ferrireducens (strain ATCC BAA-621 / DSM 15236 / T118) (Rhodoferax ferrireducens).